The sequence spans 595 residues: uncharacterized protein (595 aa).

Positions 112-180 are disordered; the sequence is VRPPGYDPES…KDVFGRALPT (69 aa). Basic and acidic residues-rich tracts occupy residues 120–133 and 161–174; these read ESAK…EKHK and RTQE…KDVF. The segment at 211–228 adopts a CCHC-type; degenerate zinc-finger fold; sequence VKCLRCGNFGHQSGDRDC. 2 disordered regions span residues 254–290 and 310–595; these read HTDP…IVAE and KSMS…RRRN. A compositionally biased stretch (basic and acidic residues) spans 256–267; sequence DPSEPLKWELKQ. 2 stretches are compositionally biased toward basic residues: residues 316–331 and 351–364; these read KKRK…KHSS and RGSK…KKSK. 3 stretches are compositionally biased toward basic and acidic residues: residues 414–428, 470–539, and 547–565; these read HYYD…EIVD, VSEK…HVYE, and FSDR…ESNR. The span at 584 to 595 shows a compositional bias: basic residues; the sequence is RKHRYSTNRRRN.

This is an uncharacterized protein from Arabidopsis thaliana (Mouse-ear cress).